The sequence spans 163 residues: Putative 4-hydroxy-4-methyl-2-oxoglutarate aldolase (163 aa).

Substrate contacts are provided by residues 75–78 (GDQL) and R97. D98 is a binding site for a divalent metal cation.

The protein belongs to the class II aldolase/RraA-like family. As to quaternary structure, homotrimer. It depends on a divalent metal cation as a cofactor.

The enzyme catalyses 4-hydroxy-4-methyl-2-oxoglutarate = 2 pyruvate. The catalysed reaction is oxaloacetate + H(+) = pyruvate + CO2. In terms of biological role, catalyzes the aldol cleavage of 4-hydroxy-4-methyl-2-oxoglutarate (HMG) into 2 molecules of pyruvate. Also contains a secondary oxaloacetate (OAA) decarboxylase activity due to the common pyruvate enolate transition state formed following C-C bond cleavage in the retro-aldol and decarboxylation reactions. In Photobacterium profundum (strain SS9), this protein is Putative 4-hydroxy-4-methyl-2-oxoglutarate aldolase.